The primary structure comprises 305 residues: Ribonuclease Z (305 aa).

Residues H61, H63, D65, H66, H138, D208, and H266 each coordinate Zn(2+). D65 (proton acceptor) is an active-site residue.

It belongs to the RNase Z family. As to quaternary structure, homodimer. The cofactor is Zn(2+).

It catalyses the reaction Endonucleolytic cleavage of RNA, removing extra 3' nucleotides from tRNA precursor, generating 3' termini of tRNAs. A 3'-hydroxy group is left at the tRNA terminus and a 5'-phosphoryl group is left at the trailer molecule.. In terms of biological role, zinc phosphodiesterase, which displays some tRNA 3'-processing endonuclease activity. Probably involved in tRNA maturation, by removing a 3'-trailer from precursor tRNA. This chain is Ribonuclease Z, found in Methanosarcina acetivorans (strain ATCC 35395 / DSM 2834 / JCM 12185 / C2A).